We begin with the raw amino-acid sequence, 641 residues long: SUMO-activating enzyme subunit 2-A (641 aa).

ATP is bound by residues 24-29 (GAGGIG), aspartate 48, 56-59 (NLNR), lysine 72, 95-96 (SI), and 117-122 (DNNAAR). Cysteine 158 and cysteine 161 together coordinate Zn(2+). Cysteine 173 acts as the Glycyl thioester intermediate in catalysis. The Zn(2+) site is built by cysteine 439 and cysteine 442. Positions 546–641 (GDVPEKGPQK…EEDDDIIALD (96 aa)) are disordered. The segment covering 548–561 (VPEKGPQKPPEESV) has biased composition (basic and acidic residues). Polar residues predominate over residues 562-579 (KNITNGSDDGAQPSTSKA). Acidic residues-rich tracts occupy residues 582-594 (QDDVLIVDSDEES) and 630-641 (PVEEDDDIIALD).

It belongs to the ubiquitin-activating E1 family. In terms of assembly, heterodimer of sae1 and uba2/sae2. The heterodimer corresponds to the two domains that are encoded on a single polypeptide chain in ubiquitin-activating enzyme E1. Interacts with ube2i.

The protein resides in the nucleus. It functions in the pathway protein modification; protein sumoylation. Functionally, the heterodimer acts as an E1 ligase for sumo1, sumo2, and sumo3. It mediates ATP-dependent activation of sumo proteins followed by formation of a thioester bond between a sumo protein and a conserved active site cysteine residue on uba2/sae2. The polypeptide is SUMO-activating enzyme subunit 2-A (uba2-a) (Xenopus laevis (African clawed frog)).